A 520-amino-acid chain; its full sequence is GMP synthase [glutamine-hydrolyzing] (520 aa).

In terms of domain architecture, Glutamine amidotransferase type-1 spans 9–202; that stretch reads HVLIVDFGSQ…THKIAGLKGD (194 aa). Cys-86 functions as the Nucleophile in the catalytic mechanism. Residues His-176 and Glu-178 contribute to the active site. Residues 203-395 form the GMPS ATP-PPase domain; that stretch reads WTMKAFREEA…LGLPPQFVGR (193 aa). 230–236 contacts ATP; it reads SGGVDSS.

In terms of assembly, homodimer.

It catalyses the reaction XMP + L-glutamine + ATP + H2O = GMP + L-glutamate + AMP + diphosphate + 2 H(+). Its pathway is purine metabolism; GMP biosynthesis; GMP from XMP (L-Gln route): step 1/1. Catalyzes the synthesis of GMP from XMP. In Phenylobacterium zucineum (strain HLK1), this protein is GMP synthase [glutamine-hydrolyzing].